The primary structure comprises 777 residues: Degenerin unc-8 (777 aa).

At 1–128 (MSPLLTWNLI…VATSSFFGRY (128 aa)) the chain is on the cytoplasmic side. Residues 129–149 (VWAALFMCMLMAFLLQTYWTM) form a helical membrane-spanning segment. Topologically, residues 150–689 (SEYLQYRTII…KETAGYTLVN (540 aa)) are extracellular. N-linked (GlcNAc...) asparagine glycosylation is found at Asn-274, Asn-319, Asn-357, Asn-411, Asn-453, Asn-533, and Asn-597. A helical membrane pass occupies residues 690–710 (LFSDFGGNIGLWIGFSVITFA). The Cytoplasmic portion of the chain corresponds to 711–777 (EFAELFCEIC…NESTKELMSK (67 aa)). The tract at residues 752–777 (QRSPKKSQPGEDEVSTNESTKELMSK) is disordered.

This sequence belongs to the amiloride-sensitive sodium channel (TC 1.A.6) family.

The protein localises to the membrane. Its function is as follows. Sodium permeable non-voltage-sensitive ion channel. Involved in the activity-dependent removal of selected presynaptic proteins, such as synaptobrevin snb-1, and Ras-related rab-3, in the remodeling of GABAergic motor neurons. This Caenorhabditis elegans protein is Degenerin unc-8.